The chain runs to 44 residues: MTTRKSAEAITYPIFTVRWLSIHALAVPTIFFLGSITAMQFIQR.

The helical transmembrane segment at 19–35 (WLSIHALAVPTIFFLGS) threads the bilayer. His23 contributes to the heme binding site.

The protein belongs to the PsbE/PsbF family. Heterodimer of an alpha subunit and a beta subunit. PSII is composed of 1 copy each of membrane proteins PsbA, PsbB, PsbC, PsbD, PsbE, PsbF, PsbH, PsbI, PsbJ, PsbK, PsbL, PsbM, PsbT, PsbX, PsbY, PsbZ, Psb30/Ycf12, at least 3 peripheral proteins of the oxygen-evolving complex and a large number of cofactors. It forms dimeric complexes. It depends on heme b as a cofactor.

It is found in the plastid. Its subcellular location is the chloroplast thylakoid membrane. This b-type cytochrome is tightly associated with the reaction center of photosystem II (PSII). PSII is a light-driven water:plastoquinone oxidoreductase that uses light energy to abstract electrons from H(2)O, generating O(2) and a proton gradient subsequently used for ATP formation. It consists of a core antenna complex that captures photons, and an electron transfer chain that converts photonic excitation into a charge separation. This Tetradesmus obliquus (Green alga) protein is Cytochrome b559 subunit beta.